Consider the following 427-residue polypeptide: Vitamin D3 receptor (427 aa).

Positions 21–96 (PRICGVCGDR…IGMMKEFILT (76 aa)) form a DNA-binding region, nuclear receptor. Residues Cys-24, Cys-27, Cys-41, Cys-44, Cys-60, Cys-66, Cys-76, and Cys-79 each contribute to the Zn(2+) site. 2 consecutive NR C4-type zinc fingers follow at residues 24–44 (CGVC…CEGC) and 60–84 (CPFN…LKRC). Positions 97–126 (DEEVQRKREMILKRKEEEALKDSLRPKLSE) are hinge. In terms of domain architecture, NR LBD spans 127–423 (EQQRIIAILL…LTPLVLEVFG (297 aa)). Tyr-143 serves as a coordination point for calcitriol. The disordered stretch occupies residues 158–183 (RVNDGGGSHPSRPNSRHTPSFSGDSS). Ser-237 serves as a coordination point for calcitriol. The segment at 246-264 (KMIPGFRDLTSEDQIVLLK) is interaction with coactivator LXXLL motif. Calcitriol contacts are provided by Arg-274, Ser-278, His-305, and His-397. The 9aaTAD motif lies at 416–424 (PLVLEVFGN).

The protein belongs to the nuclear hormone receptor family. NR1 subfamily. As to quaternary structure, homodimer in the absence of bound vitamin D3. Heterodimer with RXRA after vitamin D3 binding. Interacts with MED1, NCOA1, NCOA2, NCOA3 and NCOA6 coactivators, leading to a strong increase of transcription of target genes. Interacts with the corepressor NCOR1. Interacts with SNW1. Interacts with IRX4, the interaction does not affect its transactivation activity. Ubiquitinated by UBR5, leading to its degradation: UBR5 specifically recognizes and binds ligand-bound VDR when it is not associated with coactivators (NCOAs). In presence of NCOAs, the UBR5-degron is not accessible, preventing its ubiquitination and degradation.

It is found in the nucleus. The protein localises to the cytoplasm. Its function is as follows. Nuclear receptor for calcitriol, the active form of vitamin D3 which mediates the action of this vitamin on cells. Enters the nucleus upon vitamin D3 binding where it forms heterodimers with the retinoid X receptor/RXR. The VDR-RXR heterodimers bind to specific response elements on DNA and activate the transcription of vitamin D3-responsive target genes. Plays a central role in calcium homeostasis. This Saguinus oedipus (Cotton-top tamarin) protein is Vitamin D3 receptor (VDR).